A 559-amino-acid polypeptide reads, in one-letter code: Glutamine--tRNA ligase (559 aa).

The 'HIGH' region signature appears at 36-46 (PEPNGYLHLGH). ATP contacts are provided by residues 37–39 (EPN) and 43–49 (HLGHAKS). Residues Asp69 and Tyr214 each coordinate L-glutamine. Residues Thr233, 263–264 (RL), and 271–273 (LSK) each bind ATP. A 'KMSKS' region motif is present at residues 270 to 274 (LLSKR).

The protein belongs to the class-I aminoacyl-tRNA synthetase family. In terms of assembly, monomer.

The protein resides in the cytoplasm. It catalyses the reaction tRNA(Gln) + L-glutamine + ATP = L-glutaminyl-tRNA(Gln) + AMP + diphosphate. The chain is Glutamine--tRNA ligase from Nitrobacter winogradskyi (strain ATCC 25391 / DSM 10237 / CIP 104748 / NCIMB 11846 / Nb-255).